The chain runs to 336 residues: Dihydroorotate dehydrogenase (quinone) (336 aa).

Residues 62 to 66 (AGLDK) and threonine 86 contribute to the FMN site. Residue lysine 66 coordinates substrate. Residue 111-115 (NRMGF) participates in substrate binding. 2 residues coordinate FMN: asparagine 139 and asparagine 172. Asparagine 172 is a binding site for substrate. Serine 175 (nucleophile) is an active-site residue. Asparagine 177 is a substrate binding site. FMN is bound by residues lysine 217 and threonine 245. Residue 246–247 (NT) coordinates substrate. FMN-binding positions include glycine 268, glycine 297, and 318-319 (YS).

This sequence belongs to the dihydroorotate dehydrogenase family. Type 2 subfamily. As to quaternary structure, monomer. It depends on FMN as a cofactor.

The protein resides in the cell membrane. It carries out the reaction (S)-dihydroorotate + a quinone = orotate + a quinol. Its pathway is pyrimidine metabolism; UMP biosynthesis via de novo pathway; orotate from (S)-dihydroorotate (quinone route): step 1/1. Catalyzes the conversion of dihydroorotate to orotate with quinone as electron acceptor. The sequence is that of Dihydroorotate dehydrogenase (quinone) from Sodalis glossinidius (strain morsitans).